A 243-amino-acid chain; its full sequence is Urease accessory protein UreF 2 (243 aa).

This sequence belongs to the UreF family. UreD, UreF and UreG form a complex that acts as a GTP-hydrolysis-dependent molecular chaperone, activating the urease apoprotein by helping to assemble the nickel containing metallocenter of UreC. The UreE protein probably delivers the nickel.

It is found in the cytoplasm. Its function is as follows. Required for maturation of urease via the functional incorporation of the urease nickel metallocenter. The sequence is that of Urease accessory protein UreF 2 from Brucella suis (strain ATCC 23445 / NCTC 10510).